The chain runs to 607 residues: T-box transcription factor TBX18 (607 aa).

The short motif at H18–A28 is the Engrailed homology 1 repressor element. The tract at residues K30–V141 is disordered. The short motif at K36 to K40 is the Nuclear localization signal element. Low complexity predominate over residues E44 to G53. The T-box DNA-binding region spans L143–D330.

Homodimer. Can form a heterodimer with TBX15. Interacts with GATA4 and NKX2-5. Interacts with PAX3. Interacts (via engrailed homology 1 repressor motif) with TLE3; this interaction represses TBX18 transcriptional activity. Interacts with SIX1.

The protein localises to the nucleus. Acts as a transcriptional repressor involved in developmental processes of a variety of tissues and organs, including the heart and coronary vessels, the ureter and the vertebral column. Required for embryonic development of the sino atrial node (SAN) head area. The protein is T-box transcription factor TBX18 (TBX18) of Homo sapiens (Human).